A 502-amino-acid chain; its full sequence is Probable cytosol aminopeptidase (502 aa).

Residues lysine 269 and aspartate 274 each contribute to the Mn(2+) site. Residue lysine 281 is part of the active site. Aspartate 292, aspartate 351, and glutamate 353 together coordinate Mn(2+). The active site involves arginine 355.

Belongs to the peptidase M17 family. It depends on Mn(2+) as a cofactor.

The protein localises to the cytoplasm. The catalysed reaction is Release of an N-terminal amino acid, Xaa-|-Yaa-, in which Xaa is preferably Leu, but may be other amino acids including Pro although not Arg or Lys, and Yaa may be Pro. Amino acid amides and methyl esters are also readily hydrolyzed, but rates on arylamides are exceedingly low.. The enzyme catalyses Release of an N-terminal amino acid, preferentially leucine, but not glutamic or aspartic acids.. Presumably involved in the processing and regular turnover of intracellular proteins. Catalyzes the removal of unsubstituted N-terminal amino acids from various peptides. This is Probable cytosol aminopeptidase from Vibrio campbellii (strain ATCC BAA-1116).